Consider the following 383-residue polypeptide: S-adenosylmethionine synthase 1 (383 aa).

Histidine 15 lines the ATP pocket. Aspartate 17 contacts Mg(2+). Position 43 (glutamate 43) interacts with K(+). Positions 56 and 99 each coordinate L-methionine. A flexible loop region spans residues 99 to 109 (QSPDINLGVSR). ATP-binding positions include 162–164 (DGK), 228–229 (RF), aspartate 237, 243–244 (RK), alanine 260, and lysine 264. An L-methionine-binding site is contributed by aspartate 237. Lysine 268 contributes to the L-methionine binding site.

The protein belongs to the AdoMet synthase family. In terms of assembly, homotetramer; dimer of dimers. It depends on Mg(2+) as a cofactor. K(+) serves as cofactor.

The protein resides in the cytoplasm. The enzyme catalyses L-methionine + ATP + H2O = S-adenosyl-L-methionine + phosphate + diphosphate. It functions in the pathway amino-acid biosynthesis; S-adenosyl-L-methionine biosynthesis; S-adenosyl-L-methionine from L-methionine: step 1/1. Functionally, catalyzes the formation of S-adenosylmethionine (AdoMet) from methionine and ATP. The overall synthetic reaction is composed of two sequential steps, AdoMet formation and the subsequent tripolyphosphate hydrolysis which occurs prior to release of AdoMet from the enzyme. The protein is S-adenosylmethionine synthase 1 of Rhodopseudomonas palustris (strain BisB18).